The following is a 47-amino-acid chain: ATP-dependent zinc metalloprotease FTSH, chloroplastic (47 aa).

The protein in the N-terminal section; belongs to the AAA ATPase family. It in the C-terminal section; belongs to the peptidase M41 family. Zn(2+) is required as a cofactor.

It is found in the plastid. The protein resides in the chloroplast membrane. Its function is as follows. Seems to act as an ATP-dependent zinc metallopeptidase. The chain is ATP-dependent zinc metalloprotease FTSH, chloroplastic from Populus euphratica (Euphrates poplar).